We begin with the raw amino-acid sequence, 215 residues long: Pyrophosphate-energized proton pump 2 (215 aa).

5 helical membrane-spanning segments follow: residues Val16–Val36, Gly51–Val71, Gly86–Ile106, Gly136–Ile156, and Leu164–Leu184.

Belongs to the H(+)-translocating pyrophosphatase (TC 3.A.10) family. Homodimer. Requires Mg(2+) as cofactor.

Its subcellular location is the cell inner membrane. It carries out the reaction diphosphate + H2O + H(+)(in) = 2 phosphate + 2 H(+)(out). Its function is as follows. Proton pump that utilizes the energy of pyrophosphate hydrolysis as the driving force for proton movement across the membrane. Generates a proton motive force. This is Pyrophosphate-energized proton pump 2 (hppA2) from Rhizobium leguminosarum bv. trifolii.